Reading from the N-terminus, the 643-residue chain is 1-deoxy-D-xylulose-5-phosphate synthase (643 aa).

Thiamine diphosphate is bound by residues H72 and 113 to 115; that span reads GHA. Residue D144 coordinates Mg(2+). Thiamine diphosphate is bound by residues 145-146, N174, Y287, and E370; that span reads GA. N174 contacts Mg(2+).

The protein belongs to the transketolase family. DXPS subfamily. Homodimer. Mg(2+) is required as a cofactor. It depends on thiamine diphosphate as a cofactor.

It catalyses the reaction D-glyceraldehyde 3-phosphate + pyruvate + H(+) = 1-deoxy-D-xylulose 5-phosphate + CO2. Its pathway is metabolic intermediate biosynthesis; 1-deoxy-D-xylulose 5-phosphate biosynthesis; 1-deoxy-D-xylulose 5-phosphate from D-glyceraldehyde 3-phosphate and pyruvate: step 1/1. Functionally, catalyzes the acyloin condensation reaction between C atoms 2 and 3 of pyruvate and glyceraldehyde 3-phosphate to yield 1-deoxy-D-xylulose-5-phosphate (DXP). In Synechococcus sp. (strain CC9605), this protein is 1-deoxy-D-xylulose-5-phosphate synthase.